A 570-amino-acid polypeptide reads, in one-letter code: MEFKYNGKVESVELNKYSKTLTQDPTQPATQAMYYGIGFKDEDFKKAQVGIVSMDWDGNPCNMHLGTLGSKIKSSVNQTDGLIGLQFHTIGVSDGIANGKLGMRYSLVSREVIADSIETNAGAEYYDAIVAIPGCDKNMPGSIIGMARLNRPSIMVYGGTIEHGEYKGEKLNIVSAFESLGQKITGNISDEDYHGVICNAIPGQGACGGMYTANTLAAAIETLGMSLPYSSSNPAVSQEKQEECDEIGLAIKNLLEKDIKPSDIMTKEAFENAITIVMVLGGSTNAVLHIIAMANAIGVEITQDDFQRISDITPVLGDFKPSGKYMMEDLHKIGGLPAVLKYLLKEGKLHGDCLTVTGKTLAENVETALDLDFDSQDIMRPLKNPIKATGHLQILYGNLAQGGSVAKISGKEGEFFKGTARVFDGEQHFIDGIESGRLHAGDVAVIRNIGPVGGPGMPEMLKPTSALIGAGLGKSCALITDGRFSGGTHGFVVGHIVPEAVEGGLIGLVEDDDIIEIDAVNNSISLKVSDEEIAKRRANYQKPTPKATRGVLAKFAKLTRPASEGCVTDL.

Residue C61 participates in [2Fe-2S] cluster binding. D94 lines the Mg(2+) pocket. C135 is a [2Fe-2S] cluster binding site. Mg(2+) is bound by residues D136 and K137. Position 137 is an N6-carboxylysine (K137). C207 is a binding site for [2Fe-2S] cluster. E459 provides a ligand contact to Mg(2+). Residue S485 is the Proton acceptor of the active site.

It belongs to the IlvD/Edd family. In terms of assembly, homodimer. It depends on [2Fe-2S] cluster as a cofactor. Mg(2+) is required as a cofactor.

It carries out the reaction (2R)-2,3-dihydroxy-3-methylbutanoate = 3-methyl-2-oxobutanoate + H2O. The catalysed reaction is (2R,3R)-2,3-dihydroxy-3-methylpentanoate = (S)-3-methyl-2-oxopentanoate + H2O. It functions in the pathway amino-acid biosynthesis; L-isoleucine biosynthesis; L-isoleucine from 2-oxobutanoate: step 3/4. It participates in amino-acid biosynthesis; L-valine biosynthesis; L-valine from pyruvate: step 3/4. Functionally, functions in the biosynthesis of branched-chain amino acids. Catalyzes the dehydration of (2R,3R)-2,3-dihydroxy-3-methylpentanoate (2,3-dihydroxy-3-methylvalerate) into 2-oxo-3-methylpentanoate (2-oxo-3-methylvalerate) and of (2R)-2,3-dihydroxy-3-methylbutanoate (2,3-dihydroxyisovalerate) into 2-oxo-3-methylbutanoate (2-oxoisovalerate), the penultimate precursor to L-isoleucine and L-valine, respectively. The protein is Dihydroxy-acid dehydratase of Lactococcus lactis subsp. lactis (strain IL1403) (Streptococcus lactis).